The following is a 155-amino-acid chain: 6,7-dimethyl-8-ribityllumazine synthase (155 aa).

5-amino-6-(D-ribitylamino)uracil is bound by residues Phe24, 58-60, and 82-84; these read AFE and AII. 87 to 88 provides a ligand contact to (2S)-2-hydroxy-3-oxobutyl phosphate; it reads ST. Catalysis depends on His90, which acts as the Proton donor. 5-amino-6-(D-ribitylamino)uracil is bound at residue Phe115. Position 129 (Arg129) interacts with (2S)-2-hydroxy-3-oxobutyl phosphate.

This sequence belongs to the DMRL synthase family.

It carries out the reaction (2S)-2-hydroxy-3-oxobutyl phosphate + 5-amino-6-(D-ribitylamino)uracil = 6,7-dimethyl-8-(1-D-ribityl)lumazine + phosphate + 2 H2O + H(+). It functions in the pathway cofactor biosynthesis; riboflavin biosynthesis; riboflavin from 2-hydroxy-3-oxobutyl phosphate and 5-amino-6-(D-ribitylamino)uracil: step 1/2. Its function is as follows. Catalyzes the formation of 6,7-dimethyl-8-ribityllumazine by condensation of 5-amino-6-(D-ribitylamino)uracil with 3,4-dihydroxy-2-butanone 4-phosphate. This is the penultimate step in the biosynthesis of riboflavin. In Chlorobium phaeovibrioides (strain DSM 265 / 1930) (Prosthecochloris vibrioformis (strain DSM 265)), this protein is 6,7-dimethyl-8-ribityllumazine synthase.